A 101-amino-acid polypeptide reads, in one-letter code: Small ribosomal subunit protein uS14 (101 aa).

Belongs to the universal ribosomal protein uS14 family. Part of the 30S ribosomal subunit. Contacts proteins S3 and S10.

Its function is as follows. Binds 16S rRNA, required for the assembly of 30S particles and may also be responsible for determining the conformation of the 16S rRNA at the A site. The sequence is that of Small ribosomal subunit protein uS14 from Francisella tularensis subsp. novicida (strain U112).